The sequence spans 255 residues: Acetylglutamate kinase (255 aa).

Residues 40–41 (GG), R62, and N153 contribute to the substrate site.

Belongs to the acetylglutamate kinase family. ArgB subfamily.

It localises to the cytoplasm. It carries out the reaction N-acetyl-L-glutamate + ATP = N-acetyl-L-glutamyl 5-phosphate + ADP. It participates in amino-acid biosynthesis; L-arginine biosynthesis; N(2)-acetyl-L-ornithine from L-glutamate: step 2/4. Its function is as follows. Catalyzes the ATP-dependent phosphorylation of N-acetyl-L-glutamate. In Bacillus cereus (strain AH820), this protein is Acetylglutamate kinase.